A 280-amino-acid polypeptide reads, in one-letter code: Eukaryotic translation initiation factor 3 subunit F-1 (280 aa).

The MPN domain maps to 8–138 (VRVHPVVLFQ…LRAYVCIQLG (131 aa)).

It belongs to the eIF-3 subunit F family. As to quaternary structure, component of the eukaryotic translation initiation factor 3 (eIF-3) complex. The eIF-3 complex interacts with pix.

It is found in the cytoplasm. Its function is as follows. Component of the eukaryotic translation initiation factor 3 (eIF-3) complex, which is involved in protein synthesis of a specialized repertoire of mRNAs and, together with other initiation factors, stimulates binding of mRNA and methionyl-tRNAi to the 40S ribosome. The eIF-3 complex specifically targets and initiates translation of a subset of mRNAs involved in cell proliferation. The protein is Eukaryotic translation initiation factor 3 subunit F-1 of Drosophila willistoni (Fruit fly).